Reading from the N-terminus, the 877-residue chain is Protein SEY1 homolog (877 aa).

Residues 1–735 (MVAFAGGART…LRSIEGEKQN (735 aa)) are Cytoplasmic-facing. One can recognise a GB1/RHD3-type G domain in the interval 49 to 307 (GITYHVVGVL…VPLDGIPSYL (259 aa)). 59-66 (GGQSSGKS) is a binding site for GTP. A coiled-coil region spans residues 388–410 (RIDIVRKTEAELEEELLKVELKL). A helical transmembrane segment spans residues 736 to 756 (LPAWVLPVLLLLGWNEIWYVL). Over 757–759 (SSP) the chain is Lumenal. Residues 760–780 (VLLVVVVIIAAVFLRGFLLTQ) traverse the membrane as a helical segment. Residues 781 to 877 (WAIFEETGPT…KEEEVPTQKE (97 aa)) lie on the Cytoplasmic side of the membrane. The tract at residues 850–877 (PTVLPPSTTSATLTRRLKKEEEVPTQKE) is disordered. Residues 867–877 (KKEEEVPTQKE) are compositionally biased toward basic and acidic residues.

It belongs to the TRAFAC class dynamin-like GTPase superfamily. GB1/RHD3 GTPase family. RHD3 subfamily.

Its subcellular location is the endoplasmic reticulum membrane. Its function is as follows. Probable GTP-binding protein that may be involved in cell development. The chain is Protein SEY1 homolog from Trypanosoma cruzi (strain CL Brener).